A 161-amino-acid polypeptide reads, in one-letter code: Nucleotide-binding protein Sama_2557 (161 aa).

It belongs to the YajQ family.

Nucleotide-binding protein. This Shewanella amazonensis (strain ATCC BAA-1098 / SB2B) protein is Nucleotide-binding protein Sama_2557.